Reading from the N-terminus, the 181-residue chain is Probable RNA 2'-phosphotransferase (181 aa).

It belongs to the KptA/TPT1 family.

Its function is as follows. Removes the 2'-phosphate from RNA via an intermediate in which the phosphate is ADP-ribosylated by NAD followed by a presumed transesterification to release the RNA and generate ADP-ribose 1''-2''-cyclic phosphate (APPR&gt;P). May function as an ADP-ribosylase. This Acaryochloris marina (strain MBIC 11017) protein is Probable RNA 2'-phosphotransferase.